The chain runs to 281 residues: Large ribosomal subunit protein uL2 (281 aa).

Residues 213–281 (RNRHKGIRPT…LIIRRRKESK (69 aa)) form a disordered region.

The protein belongs to the universal ribosomal protein uL2 family. In terms of assembly, part of the 50S ribosomal subunit. Forms a bridge to the 30S subunit in the 70S ribosome.

Functionally, one of the primary rRNA binding proteins. Required for association of the 30S and 50S subunits to form the 70S ribosome, for tRNA binding and peptide bond formation. It has been suggested to have peptidyltransferase activity; this is somewhat controversial. Makes several contacts with the 16S rRNA in the 70S ribosome. The sequence is that of Large ribosomal subunit protein uL2 from Mycoplasmopsis pulmonis (strain UAB CTIP) (Mycoplasma pulmonis).